The sequence spans 355 residues: Peptide chain release factor 1 (355 aa).

Residue Gln-230 is modified to N5-methylglutamine.

It belongs to the prokaryotic/mitochondrial release factor family. In terms of processing, methylated by PrmC. Methylation increases the termination efficiency of RF1.

Its subcellular location is the cytoplasm. Peptide chain release factor 1 directs the termination of translation in response to the peptide chain termination codons UAG and UAA. This chain is Peptide chain release factor 1, found in Geobacter sulfurreducens (strain ATCC 51573 / DSM 12127 / PCA).